The sequence spans 312 residues: Elongation factor Ts (312 aa).

Residues 84–87 (TDFV) form an involved in Mg(2+) ion dislocation from EF-Tu region.

The protein belongs to the EF-Ts family.

The protein resides in the cytoplasm. Associates with the EF-Tu.GDP complex and induces the exchange of GDP to GTP. It remains bound to the aminoacyl-tRNA.EF-Tu.GTP complex up to the GTP hydrolysis stage on the ribosome. The sequence is that of Elongation factor Ts from Caulobacter vibrioides (strain ATCC 19089 / CIP 103742 / CB 15) (Caulobacter crescentus).